We begin with the raw amino-acid sequence, 442 residues long: Radical S-adenosyl methionine domain-containing protein 1, mitochondrial (442 aa).

A mitochondrion-targeting transit peptide spans 1-17 (MVPSGVRTGRWVAAARA). In terms of domain architecture, Radical SAM core spans 34 to 270 (ESASTRAALY…RTVLRDAGFR (237 aa)). Residue Tyr-43 participates in S-adenosyl-L-methionine binding. 3 residues coordinate [4Fe-4S] cluster: Cys-49, Cys-53, and Cys-56. S-adenosyl-L-methionine-binding positions include Gly-98, 99–100 (GT), Glu-131, Gln-158, Arg-170, and Asp-195.

This sequence belongs to the anaerobic coproporphyrinogen-III oxidase family. HemW subfamily. It depends on [4Fe-4S] cluster as a cofactor.

It localises to the mitochondrion. Its function is as follows. May be a heme chaperone, appears to bind heme. Homologous bacterial proteins do not have oxygen-independent coproporphyrinogen-III oxidase activity. Binds 1 [4Fe-4S] cluster. The cluster is coordinated with 3 cysteines and an exchangeable S-adenosyl-L-methionine. The polypeptide is Radical S-adenosyl methionine domain-containing protein 1, mitochondrial (Rsad1) (Mus musculus (Mouse)).